The primary structure comprises 112 residues: DNA-binding protein TSIB_0525 (112 aa).

Belongs to the PDCD5 family.

In Thermococcus sibiricus (strain DSM 12597 / MM 739), this protein is DNA-binding protein TSIB_0525.